The primary structure comprises 172 residues: Transcriptional repressor NrdR (172 aa).

A zinc finger lies at 3–34 (CPYCRNTDTRVLDSRVADDGGSIRRRRTCSAC). In terms of domain architecture, ATP-cone spans 46 to 136 (LTVLKRSGAS…VYRAFESADD (91 aa)).

It belongs to the NrdR family. Zn(2+) is required as a cofactor.

In terms of biological role, negatively regulates transcription of bacterial ribonucleotide reductase nrd genes and operons by binding to NrdR-boxes. This chain is Transcriptional repressor NrdR, found in Nocardioides sp. (strain ATCC BAA-499 / JS614).